Reading from the N-terminus, the 387-residue chain is Patatin group D-2 (387 aa).

Residues 1–23 (MATTKSFLILIVMILATTSSTFA) form the signal peptide. The 199-residue stretch at 32–230 (LSIDGGGIKG…TVADPALLSI (199 aa)) folds into the PNPLA domain. The GXGXXG motif lies at 36-41 (GGGIKG). The short motif at 75–79 (GTSTG) is the GXSXG element. Serine 77 functions as the Nucleophile in the catalytic mechanism. Asparagine 115 is a glycosylation site (N-linked (GlcNAc...) asparagine). Aspartate 216 (proton acceptor) is an active-site residue. The short motif at 216 to 218 (DGA) is the DGA/G element. A coiled-coil region spans residues 361-385 (ETYEEALKRFAKLLSDRKKLRANKA).

Belongs to the patatin family. As to expression, tuber.

Its subcellular location is the vacuole. Functionally, probable lipolytic acyl hydrolase (LAH), an activity which is thought to be involved in the response of tubers to pathogens. The chain is Patatin group D-2 from Solanum tuberosum (Potato).